We begin with the raw amino-acid sequence, 82 residues long: Small ribosomal subunit protein bS18A (82 aa).

The protein belongs to the bacterial ribosomal protein bS18 family. In terms of assembly, part of the 30S ribosomal subunit. Forms a tight heterodimer with protein bS6.

In terms of biological role, binds as a heterodimer with protein bS6 to the central domain of the 16S rRNA, where it helps stabilize the platform of the 30S subunit. The polypeptide is Small ribosomal subunit protein bS18A (Streptomyces griseus subsp. griseus (strain JCM 4626 / CBS 651.72 / NBRC 13350 / KCC S-0626 / ISP 5235)).